The primary structure comprises 84 residues: UPF0320 protein YNR077C (84 aa).

This sequence belongs to the UPF0320 family.

This is UPF0320 protein YNR077C from Saccharomyces cerevisiae (strain ATCC 204508 / S288c) (Baker's yeast).